The chain runs to 278 residues: Elongation factor Ts (278 aa).

The tract at residues 81 to 84 (TDFV) is involved in Mg(2+) ion dislocation from EF-Tu.

The protein belongs to the EF-Ts family.

The protein localises to the cytoplasm. In terms of biological role, associates with the EF-Tu.GDP complex and induces the exchange of GDP to GTP. It remains bound to the aminoacyl-tRNA.EF-Tu.GTP complex up to the GTP hydrolysis stage on the ribosome. The sequence is that of Elongation factor Ts from Thermobifida fusca (strain YX).